A 178-amino-acid polypeptide reads, in one-letter code: Adenine phosphoribosyltransferase (178 aa).

This sequence belongs to the purine/pyrimidine phosphoribosyltransferase family. In terms of assembly, homodimer.

It is found in the cytoplasm. It carries out the reaction AMP + diphosphate = 5-phospho-alpha-D-ribose 1-diphosphate + adenine. It functions in the pathway purine metabolism; AMP biosynthesis via salvage pathway; AMP from adenine: step 1/1. In terms of biological role, catalyzes a salvage reaction resulting in the formation of AMP, that is energically less costly than de novo synthesis. The chain is Adenine phosphoribosyltransferase from Cereibacter sphaeroides (strain ATCC 17029 / ATH 2.4.9) (Rhodobacter sphaeroides).